Reading from the N-terminus, the 218-residue chain is Small ribosomal subunit protein uS5 (218 aa).

An S5 DRBM domain is found at L66–V129.

It belongs to the universal ribosomal protein uS5 family. Part of the 30S ribosomal subunit. Contacts protein S4.

Functionally, with S4 and S12 plays an important role in translational accuracy. In Pyrobaculum aerophilum (strain ATCC 51768 / DSM 7523 / JCM 9630 / CIP 104966 / NBRC 100827 / IM2), this protein is Small ribosomal subunit protein uS5.